Here is a 344-residue protein sequence, read N- to C-terminus: Molybdate/tungstate import ATP-binding protein WtpC (344 aa).

One can recognise an ABC transporter domain in the interval 2 to 231 (LRVESVSKDY…PVDEGVARFL (230 aa)). 33-40 (GPSGAGKT) lines the ATP pocket. In terms of domain architecture, Mop spans 280 to 344 (KTSARNEFRA…SFKTSAIKVF (65 aa)).

This sequence belongs to the ABC transporter superfamily. Sulfate/tungstate importer (TC 3.A.1.6) family. The complex is composed of two ATP-binding proteins (WtpC), two transmembrane proteins (WtpB) and a solute-binding protein (WtpA).

The protein resides in the cell membrane. It catalyses the reaction tungstate(in) + ATP + H2O = tungstate(out) + ADP + phosphate + H(+). Its function is as follows. Part of the ABC transporter complex WtpABC involved in molybdate/tungstate import. Responsible for energy coupling to the transport system. The protein is Molybdate/tungstate import ATP-binding protein WtpC (wtpC) of Pyrococcus abyssi (strain GE5 / Orsay).